The primary structure comprises 449 residues: 23S rRNA (uracil(1939)-C(5))-methyltransferase RlmD (449 aa).

In terms of domain architecture, TRAM spans 1–66; that stretch reads MGRSRHHNKL…AKFDEAKVVE (66 aa). Residues cysteine 79, cysteine 85, cysteine 88, and cysteine 169 each coordinate [4Fe-4S] cluster. Positions 280, 309, 314, 330, 357, and 379 each coordinate S-adenosyl-L-methionine. Residue cysteine 405 is the Nucleophile of the active site.

The protein belongs to the class I-like SAM-binding methyltransferase superfamily. RNA M5U methyltransferase family. RlmD subfamily.

It carries out the reaction uridine(1939) in 23S rRNA + S-adenosyl-L-methionine = 5-methyluridine(1939) in 23S rRNA + S-adenosyl-L-homocysteine + H(+). Its function is as follows. Catalyzes the formation of 5-methyl-uridine at position 1939 (m5U1939) in 23S rRNA. The sequence is that of 23S rRNA (uracil(1939)-C(5))-methyltransferase RlmD from Francisella tularensis subsp. tularensis (strain FSC 198).